Here is a 308-residue protein sequence, read N- to C-terminus: UDP-N-acetylenolpyruvoylglucosamine reductase (308 aa).

Positions 37–201 constitute an FAD-binding PCMH-type domain; that stretch reads RVGGPAQVLF…TQATFRGTPG (165 aa). Arg181 is an active-site residue. The segment covering 216–233 has biased composition (polar residues); sequence SREATQPIKSRTGGSTFK. The disordered stretch occupies residues 216 to 236; sequence SREATQPIKSRTGGSTFKNPP. The active-site Proton donor is Ser230. Glu300 is a catalytic residue.

It belongs to the MurB family. Requires FAD as cofactor.

The protein localises to the cytoplasm. It catalyses the reaction UDP-N-acetyl-alpha-D-muramate + NADP(+) = UDP-N-acetyl-3-O-(1-carboxyvinyl)-alpha-D-glucosamine + NADPH + H(+). The protein operates within cell wall biogenesis; peptidoglycan biosynthesis. In terms of biological role, cell wall formation. The polypeptide is UDP-N-acetylenolpyruvoylglucosamine reductase (Azorhizobium caulinodans (strain ATCC 43989 / DSM 5975 / JCM 20966 / LMG 6465 / NBRC 14845 / NCIMB 13405 / ORS 571)).